Reading from the N-terminus, the 618-residue chain is Mitochondrial Rho GTPase 2 (618 aa).

The Cytoplasmic portion of the chain corresponds to methionine 1–serine 591. Residues lysine 2–histidine 168 enclose the Miro 1 domain. GTP is bound by residues glycine 16, lysine 17, threonine 18, and serine 19. Threonine 18 provides a ligand contact to Mg(2+). Positions 35 and 57 each coordinate Mg(2+). Serine 59, asparagine 118, lysine 119, aspartate 121, alanine 149, and lysine 150 together coordinate GTP. EF-hand domains follow at residues alanine 184–asparagine 219 and leucine 304–methionine 339. Ca(2+) is bound by residues aspartate 197, aspartate 199, asparagine 201, glutamate 208, aspartate 317, aspartate 319, aspartate 321, and glutamate 328. Residues arginine 416 to phenylalanine 579 form the Miro 2 domain. GTP-binding residues include glycine 428, glycine 430, lysine 431, serine 432, and alanine 433. Serine 432 provides a ligand contact to Mg(2+). Mg(2+) is bound at residue glutamate 474. Lysine 528, aspartate 530, and cysteine 559 together coordinate GTP. Residues phenylalanine 592 to leucine 614 traverse the membrane as a helical; Anchor for type IV membrane protein segment. Over alanine 615–lysine 618 the chain is Mitochondrial intermembrane.

This sequence belongs to the mitochondrial Rho GTPase family. In terms of assembly, homodimer.

It is found in the mitochondrion outer membrane. It carries out the reaction GTP + H2O = GDP + phosphate + H(+). The catalysed reaction is ATP + H2O = ADP + phosphate + H(+). It catalyses the reaction UTP + H2O = UDP + phosphate + H(+). Functionally, atypical mitochondrial nucleoside-triphosphatase (NTPase) involved in mitochondrial trafficking. Probably involved in control of anterograde transport of mitochondria and their subcellular distribution. Can hydrolyze GTP, ATP and UTP. The sequence is that of Mitochondrial Rho GTPase 2 (RHOT2) from Gallus gallus (Chicken).